A 247-amino-acid polypeptide reads, in one-letter code: DNA polymerase sliding clamp (247 aa).

The protein belongs to the PCNA family. As to quaternary structure, homotrimer. The subunits circularize to form a toroid; DNA passes through its center. Replication factor C (RFC) is required to load the toroid on the DNA.

Functionally, sliding clamp subunit that acts as a moving platform for DNA processing. Responsible for tethering the catalytic subunit of DNA polymerase and other proteins to DNA during high-speed replication. The protein is DNA polymerase sliding clamp of Methanosphaerula palustris (strain ATCC BAA-1556 / DSM 19958 / E1-9c).